Reading from the N-terminus, the 477-residue chain is Phosphatidylinositol 4-kinase type 2-beta (477 aa).

The disordered stretch occupies residues 1–80 (MPEPPRDIMA…EDRSISASLS (80 aa)). Ser-45 is modified (phosphoserine). The region spanning 116 to 447 (GVFPERISQG…AQMPCVIVEC (332 aa)) is the PI3K/PI4K catalytic domain. The tract at residues 122–128 (ISQGSSG) is G-loop. Positions 129 and 144 each coordinate ATP. The segment at 149 to 151 (EPY) is important for substrate binding. The segment at 157–170 (KWTKYVHKVCCPCC) is important for interaction with membranes. ATP-binding positions include 253 to 256 (QLFV) and 267 to 268 (RR). The important for interaction with membranes stretch occupies residues 260 to 268 (KEAEYWLRR). Residues 297 to 305 (RNTDRGNDN) are catalytic loop. The activation loop stretch occupies residues 338–358 (AIDNGLAFPFKHPDEWRAYPF). Asp-340 lines the ATP pocket. Positions 353–362 (WRAYPFHWAW) are important for interaction with membranes.

It belongs to the PI3/PI4-kinase family. Type II PI4K subfamily.

It localises to the cytoplasm. The protein localises to the cytosol. It is found in the golgi apparatus membrane. The protein resides in the endoplasmic reticulum membrane. Its subcellular location is the cell membrane. It localises to the early endosome membrane. It catalyses the reaction a 1,2-diacyl-sn-glycero-3-phospho-(1D-myo-inositol) + ATP = a 1,2-diacyl-sn-glycero-3-phospho-(1D-myo-inositol 4-phosphate) + ADP + H(+). Together with PI4K2A and the type III PI4Ks (PIK4CA and PIK4CB) it contributes to the overall PI4-kinase activity of the cell. This contribution may be especially significant in plasma membrane, endosomal and Golgi compartments. The phosphorylation of phosphatidylinositol (PI) to PI4P is the first committed step in the generation of phosphatidylinositol 4,5-bisphosphate (PIP2), a precursor of the second messenger inositol 1,4,5-trisphosphate (InsP3). Contributes to the production of InsP3 in stimulated cells and is likely to be involved in the regulation of vesicular trafficking. The chain is Phosphatidylinositol 4-kinase type 2-beta (Pi4k2b) from Rattus norvegicus (Rat).